Reading from the N-terminus, the 444-residue chain is Cell wall mannoprotein PST1 (444 aa).

Residues 1–19 form the signal peptide; that stretch reads MQLHSLIASTALLITSALA. N-linked (GlcNAc...) asparagine glycans are attached at residues asparagine 57, asparagine 76, asparagine 83, asparagine 86, asparagine 196, asparagine 210, asparagine 228, asparagine 235, asparagine 242, asparagine 263, asparagine 268, asparagine 280, asparagine 292, asparagine 305, and asparagine 329. Low complexity-rich tracts occupy residues 359-381 and 395-417; these read SVKLSSTSKSQSSQTTAKVSKSS and KAAASASSVSSSSASSSSSKSSK. The tract at residues 359-418 is disordered; that stretch reads SVKLSSTSKSQSSQTTAKVSKSSSKAEEKKFTSGDIKAAASASSVSSSSASSSSSKSSKG. A lipid anchor (GPI-anchor amidated asparagine) is attached at asparagine 419. A propeptide spans 420 to 444 (removed in mature form); it reads AAIMAPIGQTTPLVGLLTAIIMSIM.

The protein belongs to the SPS2 family. Extensively N- and O-mannosylated.

The protein localises to the cell membrane. Its subcellular location is the secreted. The protein resides in the cell wall. Functionally, has a partially redundant function to ECM33 in cell wall integrity. May be involved in a repair mechanism activated in response to cell wall damage. In Saccharomyces cerevisiae (strain YJM789) (Baker's yeast), this protein is Cell wall mannoprotein PST1 (PST1).